The following is a 293-amino-acid chain: Undecaprenyl-diphosphatase (293 aa).

The next 6 helical transmembrane spans lie at 74–94 (VLVF…AGVF), 107–127 (WMII…KDLI), 134–154 (MWIT…AEKM), 209–229 (FLLA…DAFA), 243–263 (VGTL…MKFV), and 271–291 (FAAY…LGML).

It belongs to the UppP family.

The protein localises to the cell membrane. The enzyme catalyses di-trans,octa-cis-undecaprenyl diphosphate + H2O = di-trans,octa-cis-undecaprenyl phosphate + phosphate + H(+). Its function is as follows. Catalyzes the dephosphorylation of undecaprenyl diphosphate (UPP). Confers resistance to bacitracin. The sequence is that of Undecaprenyl-diphosphatase from Corynebacterium glutamicum (strain ATCC 13032 / DSM 20300 / JCM 1318 / BCRC 11384 / CCUG 27702 / LMG 3730 / NBRC 12168 / NCIMB 10025 / NRRL B-2784 / 534).